Consider the following 140-residue polypeptide: UPF0132 membrane protein MJ1527 (140 aa).

The next 3 membrane-spanning stretches (helical) occupy residues Met40 to Glu60, Ala70 to Ile90, and Ile92 to Gly112.

It belongs to the UPF0132 family.

The protein resides in the cell membrane. The sequence is that of UPF0132 membrane protein MJ1527 from Methanocaldococcus jannaschii (strain ATCC 43067 / DSM 2661 / JAL-1 / JCM 10045 / NBRC 100440) (Methanococcus jannaschii).